The primary structure comprises 298 residues: Inosose dehydratase (298 aa).

This sequence belongs to the IolE/MocC family. It depends on glutathione as a cofactor. The cofactor is Co(2+). Requires Mn(2+) as cofactor.

It catalyses the reaction scyllo-inosose = 3D-3,5/4-trihydroxycyclohexane-1,2-dione + H2O. In terms of biological role, catalyzes the dehydration of inosose (2-keto-myo-inositol, 2KMI or 2,4,6/3,5-pentahydroxycyclohexanone) to 3D-(3,5/4)-trihydroxycyclohexane-1,2-dione (D-2,3-diketo-4-deoxy-epi-inositol). The protein is Inosose dehydratase of Glaesserella parasuis serovar 5 (strain SH0165) (Haemophilus parasuis).